Reading from the N-terminus, the 829-residue chain is Sodium/hydrogen exchanger 3 (829 aa).

The signal sequence occupies residues 1–26 (MWHRALGPGWKLLLALALTSLQGARG). At 27–46 (AEEEPSSDGSFQVVTFKWHH) the chain is on the extracellular side. The chain crosses the membrane as a helical span at residues 47 to 69 (VQDPYIIALWILVASLAKIVFHL). Over 70 to 77 (SHKVTSIV) the chain is Cytoplasmic. The helical transmembrane segment at 78–97 (PESALLIVLGLVLGGIVWAA) threads the bilayer. Residues 98-106 (DHIASFTLT) lie on the Extracellular side of the membrane. Residues 107 to 124 (PTLFFFYLLPPIVLDAGY) traverse the membrane as a helical segment. The Cytoplasmic portion of the chain corresponds to 125–127 (FMP). The chain crosses the membrane as a helical span at residues 128–163 (NRLFFGNLGTILLYAVIGTIWNAATTGLSLYGVFLS). 3 residues coordinate a 1,2-diacyl-sn-glycero-3-phospho-(1D-myo-inositol): Gly-133, Gly-136, and Thr-137. Residues 164-176 (GLMGELKIGLLDF) lie on the Extracellular side of the membrane. A helical transmembrane segment spans residues 177–198 (LLFGSLIAAVDPVAVLAVFEEV). The Cytoplasmic portion of the chain corresponds to 199–200 (HV). The helical transmembrane segment at 201 to 232 (NEVLFIIVFGESLLNDAVTVVLYNVFESFVTL) threads the bilayer. The Extracellular portion of the chain corresponds to 233 to 239 (GGDAVTG). The chain crosses the membrane as a helical span at residues 240–274 (VDCVKGIVSFFVVSLGGTLVGVIFAFLLSLVTRFT). Over 275-276 (KH) the chain is Cytoplasmic. A helical membrane pass occupies residues 277 to 299 (VRIIEPGFVFVISYLSYLTSEML). At 300–301 (SL) the chain is on the extracellular side. A helical membrane pass occupies residues 302–318 (SSILAITFCGICCQKYV). At 319-325 (KANISEQ) the chain is on the cytoplasmic side. The helical transmembrane segment at 326–354 (SATTVRYTMKMLASGAETIIFMFLGISAV) threads the bilayer. Topologically, residues 355–362 (NPDIWTWN) are extracellular. A helical transmembrane segment spans residues 363–384 (TAFVLLTLVFISVYRAIGVVLQ). Residues 385-397 (TWILNRYRMVQLE) are Cytoplasmic-facing. Met-393 contacts a 1,2-diacyl-sn-glycero-3-phospho-(1D-myo-inositol). Residues 398-421 (TIDQVVMSYGGLRGAVAYALVVLL) traverse the membrane as a helical segment. Topologically, residues 422–428 (DEKKVKE) are extracellular. Residues 429-462 (KNLFVSTTLIVVFFTVIFQGLTIKPLVQWLKVKR) traverse the membrane as a helical segment. Topologically, residues 463-829 (SEHREPKLNE…QPAAPESTHM (367 aa)) are cytoplasmic. 3 residues coordinate a 1,2-diacyl-sn-glycero-3-phospho-(1D-myo-inositol): Gln-492, Ile-493, and His-495. Phosphoserine is present on residues Ser-550 and Ser-558. The interaction with EZR stretch occupies residues 571–585 (RPSTVEASVSYFLRE). The interval 586–663 (NVSAVCLDMQ…RKRLESFKSA (78 aa)) is interaction with NHERF4. Residues 587-691 (VSAVCLDMQS…AQKRRNSSIP (105 aa)) form an interaction with AHCYL1 region. Phosphoserine occurs at positions 588 and 603. The residue at position 659 (Ser-659) is a Phosphoserine; by SGK1. The segment covering 677–687 (YKRERAQKRRN) has biased composition (basic residues). Residues 677–696 (YKRERAQKRRNSSIPNGKLP) are disordered. Residues Ser-714, Ser-805, and Ser-808 each carry the phosphoserine modification.

The protein belongs to the monovalent cation:proton antiporter 1 (CPA1) transporter (TC 2.A.36) family. In terms of assembly, homodimer. Found in the forms of complex and dynamic macromolecular complexes. Binds NHERF1 and NHERF2. Interacts with CHP1; this interaction increases trafficking and activity of SLC9A3 at the plasma membrane. Interacts with CHP2 and SHANK2. Interacts with PDZK1 (via C-terminal PDZ domain). Interacts with NHERF4 and interactions decrease in response to elevated calcium ion levels. Interacts with AHCYL1; the interaction is required for SLC9A3 activity. Interacts with EZR; interaction targets SLC9A3 to the apical membrane. Interacts with SNX27 (via PDZ domains); directs SLC9A3 membrane insertion from early endosomes to the plasma membrane. Post-translationally, phosphorylated by PKA, which inhibits activity. Phosphorylation at Ser-659 by SGK1 is associated with increased abundance at the cell membrane. Phosphorylation at Ser-714 by CSNK2A1 regulates SLC9A3 activity through the formation of multiple signaling complexes.

Its subcellular location is the apical cell membrane. It is found in the cell membrane. The protein localises to the recycling endosome membrane. The protein resides in the early endosome membrane. The catalysed reaction is Na(+)(in) + H(+)(out) = Na(+)(out) + H(+)(in). Seems to switch between active and inactive modes in response to various stimuli. Activated directly or indirectly by membrane phosphatidylinositol (PIs). Regulated by a variety of auxiliary proteins, which facilitate the maturation, cell surface expression and function of the transporter. Inhibited specifically by the drug tenapanor. Functionally, plasma membrane Na(+)/H(+) antiporter. Exchanges intracellular H(+) ions for extracellular Na(+) in 1:1 stoichiometry, playing a key role in salt and fluid absorption and pH homeostasis. Major apical Na(+)/H(+) exchanger in kidney and intestine playing an important role in renal and intestine Na(+) absorption and blood pressure regulation. This is Sodium/hydrogen exchanger 3 from Mus musculus (Mouse).